A 284-amino-acid polypeptide reads, in one-letter code: Shikimate dehydrogenase (NADP(+)) (284 aa).

Residues 20-22 and Ser-67 contribute to the shikimate site; that span reads SIS. Lys-71 functions as the Proton acceptor in the catalytic mechanism. 2 residues coordinate shikimate: Asn-92 and Asp-107. NADP(+)-binding positions include 129 to 133 and Val-227; that span reads GAGGA. Tyr-229 contributes to the shikimate binding site. Gly-250 is a binding site for NADP(+).

It belongs to the shikimate dehydrogenase family. As to quaternary structure, homodimer.

It carries out the reaction shikimate + NADP(+) = 3-dehydroshikimate + NADPH + H(+). It functions in the pathway metabolic intermediate biosynthesis; chorismate biosynthesis; chorismate from D-erythrose 4-phosphate and phosphoenolpyruvate: step 4/7. Functionally, involved in the biosynthesis of the chorismate, which leads to the biosynthesis of aromatic amino acids. Catalyzes the reversible NADPH linked reduction of 3-dehydroshikimate (DHSA) to yield shikimate (SA). In Streptococcus sanguinis (strain SK36), this protein is Shikimate dehydrogenase (NADP(+)).